The chain runs to 571 residues: Streptolysin O (571 aa).

Positions 1–33 (MSNKKTFKKYSRVAGLLTAALIIGNLVTANAES) are cleaved as a signal peptide. The segment at 30–108 (NAESNKQNTA…KKSEEDHTEE (79 aa)) is disordered. The span at 37–48 (NTASTETTTTNE) shows a compositional bias: low complexity. 2 stretches are compositionally biased toward basic and acidic residues: residues 50-68 (PKPESSELTTEKAGQKTDD) and 79-108 (APKEMPLESAEKEEKKSEDKKKSEEDHTEE). 4 beta stranded membrane passes run 260–273 (KSQIEAALNVNSKI), 280–289 (IDFKSISKGE), 358–367 (SNDVEAAFSA), and 375–387 (KTNGKYSDILENS). Residues 529 to 539 (ECTGLAWEWWR) carry the Conserved undecapeptide motif. The short motif at 561–562 (TL) is the Cholesterol binding element.

It belongs to the cholesterol-dependent cytolysin family. As to quaternary structure, homooligomeric pore complex of 35 to 50 subunits; when inserted in the host membrane.

Its subcellular location is the secreted. The protein localises to the host cell membrane. A cholesterol-dependent toxin that causes cytolysis by forming pores in cholesterol containing host membranes. After binding to target membranes, the protein undergoes a major conformation change, leading to its insertion in the host membrane and formation of an oligomeric pore complex. Cholesterol is required for binding to host membranes, membrane insertion and pore formation; cholesterol binding is mediated by a Thr-Leu pair in the C-terminus. Can be reversibly inactivated by oxidation. This chain is Streptolysin O (slo), found in Streptococcus pyogenes serotype M18 (strain MGAS8232).